The following is a 121-amino-acid chain: U15-barytoxin-Tl1a (121 aa).

An N-terminal signal peptide occupies residues 1 to 17 (MKLSVIVLVASFGFAVA). Intrachain disulfides connect C56–C74, C67–C80, C71–C119, and C73–C90.

This sequence belongs to the neurotoxin 03 (Tx2) family. 03 subfamily. In terms of tissue distribution, expressed by the venom gland.

The protein localises to the secreted. In terms of biological role, ion channel inhibitor. This chain is U15-barytoxin-Tl1a, found in Trittame loki (Brush-footed trapdoor spider).